A 118-amino-acid polypeptide reads, in one-letter code: Probable FK506-binding protein (118 aa).

One can recognise a PPIase FKBP-type domain in the interval 33–118; the sequence is GGEVEVHYVG…LVFIIDLISA (86 aa).

It belongs to the FKBP-type PPIase family.

The catalysed reaction is [protein]-peptidylproline (omega=180) = [protein]-peptidylproline (omega=0). In terms of biological role, PPIases accelerate the folding of proteins. In Corynebacterium glutamicum (strain ATCC 13032 / DSM 20300 / JCM 1318 / BCRC 11384 / CCUG 27702 / LMG 3730 / NBRC 12168 / NCIMB 10025 / NRRL B-2784 / 534), this protein is Probable FK506-binding protein.